The primary structure comprises 449 residues: Probable glycine dehydrogenase (decarboxylating) subunit 1 (449 aa).

It belongs to the GcvP family. N-terminal subunit subfamily. The glycine cleavage system is composed of four proteins: P, T, L and H. In this organism, the P 'protein' is a heterodimer of two subunits.

The enzyme catalyses N(6)-[(R)-lipoyl]-L-lysyl-[glycine-cleavage complex H protein] + glycine + H(+) = N(6)-[(R)-S(8)-aminomethyldihydrolipoyl]-L-lysyl-[glycine-cleavage complex H protein] + CO2. Its function is as follows. The glycine cleavage system catalyzes the degradation of glycine. The P protein binds the alpha-amino group of glycine through its pyridoxal phosphate cofactor; CO(2) is released and the remaining methylamine moiety is then transferred to the lipoamide cofactor of the H protein. This chain is Probable glycine dehydrogenase (decarboxylating) subunit 1, found in Pyrococcus horikoshii (strain ATCC 700860 / DSM 12428 / JCM 9974 / NBRC 100139 / OT-3).